A 317-amino-acid chain; its full sequence is Protein phosphatase 1 regulatory subunit 3C-B (317 aa).

Residues 150 to 258 form the CBM21 domain; the sequence is RNRLKKNLVC…NNDGKNYKLV (109 aa).

Interacts with PPP1CC catalytic subunit of PP1 and associates with glycogen. Forms complexes with glycogen phosphorylase, glycogen synthase and phosphorylase kinase which is necessary for its regulation of PP1 activity.

Its function is as follows. Acts as a glycogen-targeting subunit for PP1 and regulates its activity. Activates glycogen synthase, reduces glycogen phosphorylase activity and limits glycogen breakdown. In Danio rerio (Zebrafish), this protein is Protein phosphatase 1 regulatory subunit 3C-B (ppp1r3cb).